Reading from the N-terminus, the 116-residue chain is uncharacterized protein (116 aa).

This is an uncharacterized protein from Bacillus subtilis (strain 168).